The primary structure comprises 225 residues: 2-C-methyl-D-erythritol 4-phosphate cytidylyltransferase (225 aa).

Belongs to the IspD/TarI cytidylyltransferase family. IspD subfamily.

The catalysed reaction is 2-C-methyl-D-erythritol 4-phosphate + CTP + H(+) = 4-CDP-2-C-methyl-D-erythritol + diphosphate. It functions in the pathway isoprenoid biosynthesis; isopentenyl diphosphate biosynthesis via DXP pathway; isopentenyl diphosphate from 1-deoxy-D-xylulose 5-phosphate: step 2/6. Its function is as follows. Catalyzes the formation of 4-diphosphocytidyl-2-C-methyl-D-erythritol from CTP and 2-C-methyl-D-erythritol 4-phosphate (MEP). This Prochlorococcus marinus (strain MIT 9313) protein is 2-C-methyl-D-erythritol 4-phosphate cytidylyltransferase.